Reading from the N-terminus, the 602-residue chain is MGMWLVWIFALDNILCASKEEEKKCELPRRLGEMNIKEITEKVEIDGLDTKIIIPFIFHDAKPVVSPITRYRDISQEERRYVEEIIKGLPKLVWDSMVWIYVPGYTWWIKSLMDNVFNATSFEGFNPVDLYKKAKGKSEIRFADLVMSIFRFNGRIVNRFGQRLVREVEVKIKEMSNEMPSSEKKEKEERLNQILEYGKKLCTREKQEEMLKAQKIVCDACVYLWEKGSEDRVAITIMVYLRNLEVQMIRSSMKKVKVGEPLTFYMNHEVLISAYKEYKIGVAGELVKQVLKNDKDIDSESVNRVVCSIREREEDERKRAEAESARNREELLRMEEREKGKEKGSKGKGRKKRGKKGAGEAKEESKEEDRGGEEEESVEADVPVEEMAVGGARPKKKSPKEESKGEERCYKVHKRVLRWMKSAERIKYELDNGEEEKWRGRSIEEIEEQKALHDIIEVLKLLRSKECDKFFVRTGKYMKGGSERWNMVGVGILEEGGKKRVGNVEVGLFEGKGGENIIYHLMFKPTDFEEEGEGARPSFGRCDGVDAIEEGRISDMSGFQYPPGVRSEITSSGSEFRIVWKNQRDTSLVLRSLTVLRIPEIR.

Residues 313–345 (EEDERKRAEAESARNREELLRMEEREKGKEKGS) are compositionally biased toward basic and acidic residues. The disordered stretch occupies residues 313-407 (EEDERKRAEA…SPKEESKGEE (95 aa)). Basic residues predominate over residues 346–356 (KGKGRKKRGKK). Residues 357–369 (GAGEAKEESKEED) are compositionally biased toward basic and acidic residues. A compositionally biased stretch (acidic residues) spans 370 to 384 (RGGEEEESVEADVPV).

The protein belongs to the UPF0329 family.

The chain is UPF0329 protein ECU02_0060 from Encephalitozoon cuniculi (strain GB-M1) (Microsporidian parasite).